The sequence spans 333 residues: MGLLERLRKEWFIAGIALVIAAARLEPAVGVKGGPLKPEITITYIAVSAIFFNSGLSLKTEELTSALMHVKLHLFVQIFTLVFFPTAIWLFLQLLSITPINEWLLKGLQTVGCMPPPVSSAVILTKAVGGNEAAAIFNSAFGSFLLGSSSSVPFTSIFSQLFMTVVVPLIIGQIVRRYIKDWLERRKPPFGTISSCVLLMIIYTTFCDTFANPNIDLDKFSLIIIVFIIFSVQMSFMFLTFLFSTRSNSGFTPADTVAIIFCSTHKSLTLGIPMLKIVFAGYEHLSLISVPLLIYHPAQILLGSLLVPTIKSWMVSRQKALKLTRQPKVPVKV.

Topologically, residues 1–10 are cytoplasmic; the sequence is MGLLERLRKE. A helical transmembrane segment spans residues 11 to 31; that stretch reads WFIAGIALVIAAARLEPAVGV. Residues 32–37 lie on the Extracellular side of the membrane; it reads KGGPLK. The helical transmembrane segment at 38–58 threads the bilayer; the sequence is PEITITYIAVSAIFFNSGLSL. The Cytoplasmic segment spans residues 59–71; that stretch reads KTEELTSALMHVK. A helical transmembrane segment spans residues 72–92; the sequence is LHLFVQIFTLVFFPTAIWLFL. Residues 93-103 lie on the Extracellular side of the membrane; sequence QLLSITPINEW. Residues 104-124 traverse the membrane as a helical segment; sequence LLKGLQTVGCMPPPVSSAVIL. Over 125–126 the chain is Cytoplasmic; the sequence is TK. The helical transmembrane segment at 127-147 threads the bilayer; that stretch reads AVGGNEAAAIFNSAFGSFLLG. At 148–151 the chain is on the extracellular side; that stretch reads SSSS. A helical transmembrane segment spans residues 152 to 172; it reads VPFTSIFSQLFMTVVVPLIIG. Topologically, residues 173-189 are cytoplasmic; sequence QIVRRYIKDWLERRKPP. The chain crosses the membrane as a helical span at residues 190-210; sequence FGTISSCVLLMIIYTTFCDTF. The Extracellular portion of the chain corresponds to 211 to 222; that stretch reads ANPNIDLDKFSL. A helical transmembrane segment spans residues 223 to 243; it reads IIIVFIIFSVQMSFMFLTFLF. Over 244-258 the chain is Cytoplasmic; it reads STRSNSGFTPADTVA. The chain crosses the membrane as a helical span at residues 259–279; the sequence is IIFCSTHKSLTLGIPMLKIVF. Residues 280–286 are Extracellular-facing; the sequence is AGYEHLS. Residues 287–307 traverse the membrane as a helical segment; sequence LISVPLLIYHPAQILLGSLLV. At 308–333 the chain is on the cytoplasmic side; the sequence is PTIKSWMVSRQKALKLTRQPKVPVKV.

This sequence belongs to the bile acid:sodium symporter (BASS) (TC 2.A.28) family.

Its subcellular location is the cell membrane. The protein localises to the endoplasmic reticulum membrane. It localises to the golgi apparatus membrane. In terms of biological role, involved in teeth and skeletal development. Has an essential role in the biosynthesis and trafficking of glycosaminoglycans and glycoproteins to produce a proper functioning extracellular matrix. Required for extracellular matrix mineralization. Also involved in the regulation of cellular calcium homeostasis. Does not show transport activity towards bile acids or steroid sulfates. This is Sodium/bile acid cotransporter 7 (SLC10A7) from Gallus gallus (Chicken).